A 492-amino-acid chain; its full sequence is GTPase-activating protein MSB4 (492 aa).

In terms of domain architecture, Rab-GAP TBC spans 147 to 367 (GIPAEWRGNA…RIWDCLFYEE (221 aa)).

It localises to the cytoplasm. It is found in the bud. The protein localises to the bud neck. Functionally, regulates exocytosis by functioning as a GAP for SEC4. Also required for efficient polarization of the actin patches. This is GTPase-activating protein MSB4 (MSB4) from Saccharomyces cerevisiae (strain ATCC 204508 / S288c) (Baker's yeast).